A 570-amino-acid polypeptide reads, in one-letter code: Sulfite reductase [NADPH] hemoprotein beta-component (570 aa).

[4Fe-4S] cluster is bound by residues Cys-434, Cys-440, Cys-479, and Cys-483. Cys-483 is a binding site for siroheme.

The protein belongs to the nitrite and sulfite reductase 4Fe-4S domain family. As to quaternary structure, alpha(8)-beta(8). The alpha component is a flavoprotein, the beta component is a hemoprotein. It depends on siroheme as a cofactor. The cofactor is [4Fe-4S] cluster.

The enzyme catalyses hydrogen sulfide + 3 NADP(+) + 3 H2O = sulfite + 3 NADPH + 4 H(+). Its pathway is sulfur metabolism; hydrogen sulfide biosynthesis; hydrogen sulfide from sulfite (NADPH route): step 1/1. Its function is as follows. Component of the sulfite reductase complex that catalyzes the 6-electron reduction of sulfite to sulfide. This is one of several activities required for the biosynthesis of L-cysteine from sulfate. The polypeptide is Sulfite reductase [NADPH] hemoprotein beta-component (Salmonella paratyphi A (strain ATCC 9150 / SARB42)).